A 302-amino-acid polypeptide reads, in one-letter code: Aspartate carbamoyltransferase catalytic subunit (302 aa).

Residues R54 and T55 each coordinate carbamoyl phosphate. K82 is an L-aspartate binding site. Residues R104, H132, and Q135 each coordinate carbamoyl phosphate. Residues R165 and R217 each coordinate L-aspartate. Carbamoyl phosphate contacts are provided by G257 and P258.

Belongs to the aspartate/ornithine carbamoyltransferase superfamily. ATCase family. As to quaternary structure, heterododecamer (2C3:3R2) of six catalytic PyrB chains organized as two trimers (C3), and six regulatory PyrI chains organized as three dimers (R2).

It carries out the reaction carbamoyl phosphate + L-aspartate = N-carbamoyl-L-aspartate + phosphate + H(+). Its pathway is pyrimidine metabolism; UMP biosynthesis via de novo pathway; (S)-dihydroorotate from bicarbonate: step 2/3. Its function is as follows. Catalyzes the condensation of carbamoyl phosphate and aspartate to form carbamoyl aspartate and inorganic phosphate, the committed step in the de novo pyrimidine nucleotide biosynthesis pathway. This chain is Aspartate carbamoyltransferase catalytic subunit, found in Thermus thermophilus (strain ATCC BAA-163 / DSM 7039 / HB27).